A 6306-amino-acid polypeptide reads, in one-letter code: Adhesion G-protein coupled receptor V1 (6306 aa).

The N-terminal stretch at 1-29 (MSVFLGPGMPSASLLVNLLSALLILFVFG) is a signal peptide. 22 consecutive Calx-beta domains span residues 30–117 (ETEI…FHLT), 133–237 (VTVT…IQLK), 262–362 (PVRF…HIML), 388–488 (KPYG…LQIL), 645–745 (PAIA…TLSL), 763–861 (DLII…VVLS), 876–979 (VNIT…VILL), 993–1093 (ATLR…IILL), 1108–1208 (TVII…LKLV), 1444–1544 (AMPR…FILK), 1564–1665 (TIQK…RVTL), 1710–1809 (TGLP…VELL), 1850–1952 (ILVT…VSVL), 1966–2079 (TLTV…IELL), 2107–2206 (QLII…VQLM), 2222–2324 (VIII…VQLT), 2441–2541 (TLCL…FLIS), 2584–2676 (NISP…VSLV), 2689–2789 (DTVR…QVIL), 2814–2925 (LTVE…VNLT), 2947–3048 (TAQV…LILT), and 3063–3172 (LIIV…CTLF). Over 30-5908 (ETEIRFTGQT…TDNLSSYNEA (5879 aa)) the chain is Extracellular. EAR repeat units follow at residues 3255-3296 (VFSV…RWQG), 3297-3345 (IFIP…TFTS), 3348-3393 (KLFL…RWNG), 3395-3439 (SFVL…RWSG), 3441-3488 (GFIN…IWEM), and 3492-3534 (SFRY…CWNS). Calx-beta domains lie at 3525–3625 (DMSA…KVQL), 3639–3739 (SVTI…IVTL), 3775–3875 (GLVG…VTIT), 3899–4006 (AEIM…ISLI), 4020–4123 (VTVV…IQLI), 4139–4239 (IIIR…EFQL), 4255–4354 (ANIT…LTIT), 4387–4489 (RIII…ILLT), 4512–4612 (SPFG…IIKL), 4634–4734 (EFGD…VIQL), 4992–5095 (SGFI…INLT), 5288–5332 (AVEE…YVFL), and 5368–5468 (IGFS…FVEL). The GAIN-B domain maps to 5747-5903 (SILALHWYPQ…AVYARTDNLS (157 aa)). Disulfide bonds link cysteine 5856–cysteine 5885 and cysteine 5873–cysteine 5887. Residues 5856 to 5903 (CLLWNQAAASWLSDSQFCKVVEETADYVECACSHMSVYAVYARTDNLS) form a GPS region. The chain crosses the membrane as a helical span at residues 5909–5929 (FFTSGFICISGLCLAVLSHIF). Over 5930–5939 (CARYSMFAAK) the chain is Cytoplasmic. The helical transmembrane segment at 5940 to 5960 (LLTHMMAASLGTQILFLASAY) threads the bilayer. The Extracellular segment spans residues 5961 to 5979 (ASPQLAEESCSAMAAVTHY). The chain crosses the membrane as a helical span at residues 5980-6000 (LYLCQFSWMLIQSVNFWYVLV). Residues 6001-6010 (MNDEHTERRY) lie on the Cytoplasmic side of the membrane. A helical membrane pass occupies residues 6011 to 6031 (LLFFLLSWGLPAFVVILLIVI). Over 6032-6059 (LKGIYHQSMSQIYGLIHGDLCFIPNVYA) the chain is Extracellular. Residues 6060–6080 (ALFTAALVPLTCLVVVFVVFI) form a helical membrane-spanning segment. The Cytoplasmic segment spans residues 6081-6104 (HAYQVKPQWKAYDDVFRGRTNAAE). The chain crosses the membrane as a helical span at residues 6105-6125 (IPLILYLFALISVTWLWGGLH). At 6126-6133 (MAYRHFWM) the chain is on the extracellular side. A helical transmembrane segment spans residues 6134-6154 (LVLFVIFNSLQGLYVFMVYFI). At 6155 to 6306 (LHNQMCCPMK…RRIPIADTHL (152 aa)) the chain is on the cytoplasmic side. The disordered stretch occupies residues 6216–6248 (ASFQQGSQASPDLKPSPQNGATFPSSGGYGQGS). Residues 6217 to 6240 (SFQQGSQASPDLKPSPQNGATFPS) are compositionally biased toward polar residues.

Belongs to the G-protein coupled receptor 2 family. Adhesion G-protein coupled receptor (ADGR) subfamily. In terms of assembly, forms a heterodimer, consisting of a large extracellular region (alpha subunit) non-covalently linked to a seven-transmembrane moiety (beta subunit). Component of USH2 complex, composed of ADGRV1, PDZD7, USH2A and WHRN. Interacts with USH2A and WHRN. Interacts (via the cytoplasmic region) with PDZD7. Interacts (via the cytoplasmic region) with MYO7A (via MyTH4-FERM domains). Post-translationally, autoproteolytically cleaved into 2 subunits, an extracellular alpha subunit and a seven-transmembrane subunit. As to expression, expressed at low levels in adult tissues.

The protein resides in the cell membrane. Its subcellular location is the cell projection. It is found in the stereocilium membrane. It localises to the photoreceptor inner segment. Its function is as follows. G-protein coupled receptor which has an essential role in the development of hearing and vision. Couples to G-alpha(i)-proteins, GNAI1/2/3, G-alpha(q)-proteins, GNAQ, as well as G-alpha(s)-proteins, GNAS, inhibiting adenylate cyclase (AC) activity and cAMP production. Required for the hair bundle ankle formation, which connects growing stereocilia in developing cochlear hair cells of the inner ear. In response to extracellular calcium, activates kinases PKA and PKC to regulate myelination by inhibiting the ubiquitination of MAG, thus enhancing the stability of this protein in myelin-forming cells of the auditory pathway. In retina photoreceptors, the USH2 complex is required for the maintenance of periciliary membrane complex that seems to play a role in regulating intracellular protein transport. Involved in the regulation of bone metabolism. Cleaved ADGRV1 beta-subunit couples with G-alpha(i)-proteins, GNAI1/2/3, and constitutively inhibits adenylate cyclase (AC) activity with a stronger effect than full ADGRV1. In Homo sapiens (Human), this protein is Adhesion G-protein coupled receptor V1.